The sequence spans 291 residues: Undecaprenyl-diphosphatase (291 aa).

8 helical membrane passes run 1–21, 48–68, 102–122, 126–146, 162–182, 203–223, 231–251, and 267–287; these read MFII…LTEF, SAFT…AWVF, LHVL…DDFI, LFSV…MIIA, ISYF…WPGF, SDFT…LSLL, IADI…GLIA, and FAIY…GFGI.

This sequence belongs to the UppP family.

The protein resides in the cell membrane. The catalysed reaction is di-trans,octa-cis-undecaprenyl diphosphate + H2O = di-trans,octa-cis-undecaprenyl phosphate + phosphate + H(+). In terms of biological role, catalyzes the dephosphorylation of undecaprenyl diphosphate (UPP). Confers resistance to bacitracin. The polypeptide is Undecaprenyl-diphosphatase (Staphylococcus aureus (strain COL)).